Reading from the N-terminus, the 198-residue chain is Holliday junction branch migration complex subunit RuvA (198 aa).

A domain I region spans residues 1 to 61 (MILYRIGEII…EYQYATYAFK (61 aa)). The domain II stretch occupies residues 62–139 (DFKERLLFVD…KMISPKDAAK (78 aa)). Positions 140–144 (INETT) are flexible linker. The interval 144–198 (TNTLSEVKETLKMVGFKTKQIDGALSKISSTDDVEKMIEEAIKLMSTQNYESATA) is domain III.

It belongs to the RuvA family. Homotetramer. Forms an RuvA(8)-RuvB(12)-Holliday junction (HJ) complex. HJ DNA is sandwiched between 2 RuvA tetramers; dsDNA enters through RuvA and exits via RuvB. An RuvB hexamer assembles on each DNA strand where it exits the tetramer. Each RuvB hexamer is contacted by two RuvA subunits (via domain III) on 2 adjacent RuvB subunits; this complex drives branch migration. In the full resolvosome a probable DNA-RuvA(4)-RuvB(12)-RuvC(2) complex forms which resolves the HJ.

The protein localises to the cytoplasm. In terms of biological role, the RuvA-RuvB-RuvC complex processes Holliday junction (HJ) DNA during genetic recombination and DNA repair, while the RuvA-RuvB complex plays an important role in the rescue of blocked DNA replication forks via replication fork reversal (RFR). RuvA specifically binds to HJ cruciform DNA, conferring on it an open structure. The RuvB hexamer acts as an ATP-dependent pump, pulling dsDNA into and through the RuvAB complex. HJ branch migration allows RuvC to scan DNA until it finds its consensus sequence, where it cleaves and resolves the cruciform DNA. In Mycoplasmopsis agalactiae (strain NCTC 10123 / CIP 59.7 / PG2) (Mycoplasma agalactiae), this protein is Holliday junction branch migration complex subunit RuvA.